Here is a 277-residue protein sequence, read N- to C-terminus: Undecaprenyl-diphosphatase (277 aa).

6 helical membrane-spanning segments follow: residues phenylalanine 47–isoleucine 67, valine 85–isoleucine 105, tryptophan 108–tryptophan 128, alanine 183–serine 203, valine 218–leucine 238, and phenylalanine 249–isoleucine 269.

Belongs to the UppP family.

The protein localises to the cell inner membrane. The enzyme catalyses di-trans,octa-cis-undecaprenyl diphosphate + H2O = di-trans,octa-cis-undecaprenyl phosphate + phosphate + H(+). Catalyzes the dephosphorylation of undecaprenyl diphosphate (UPP). Confers resistance to bacitracin. The polypeptide is Undecaprenyl-diphosphatase (Pseudomonas paraeruginosa (strain DSM 24068 / PA7) (Pseudomonas aeruginosa (strain PA7))).